A 237-amino-acid chain; its full sequence is UPF0280 protein Mbur_0309 (237 aa).

Belongs to the UPF0280 family.

The polypeptide is UPF0280 protein Mbur_0309 (Methanococcoides burtonii (strain DSM 6242 / NBRC 107633 / OCM 468 / ACE-M)).